A 419-amino-acid chain; its full sequence is Tryptophan synthase beta chain (419 aa).

Position 86 is an N6-(pyridoxal phosphate)lysine (Lys86). The segment covering 394–403 has biased composition (basic and acidic residues); it reads VEQQKVEQQK. The disordered stretch occupies residues 394–419; it reads VEQQKVEQQKADNQNTEKNNQESGNE. Residues 404–419 are compositionally biased toward polar residues; the sequence is ADNQNTEKNNQESGNE.

It belongs to the TrpB family. As to quaternary structure, tetramer of two alpha and two beta chains. Pyridoxal 5'-phosphate is required as a cofactor.

It catalyses the reaction (1S,2R)-1-C-(indol-3-yl)glycerol 3-phosphate + L-serine = D-glyceraldehyde 3-phosphate + L-tryptophan + H2O. Its pathway is amino-acid biosynthesis; L-tryptophan biosynthesis; L-tryptophan from chorismate: step 5/5. In terms of biological role, the beta subunit is responsible for the synthesis of L-tryptophan from indole and L-serine. The protein is Tryptophan synthase beta chain of Shewanella halifaxensis (strain HAW-EB4).